The following is a 688-amino-acid chain: PTS system glucoside-specific EIICBA component (688 aa).

The 425-residue stretch at 3–427 (KKLFGQLQRI…FKLKTPGRED (425 aa)) folds into the PTS EIIC type-1 domain. The next 10 helical transmembrane spans lie at 12–32 (IGKALMLPVAILPAAGILLAF), 81–101 (LGLAGGDGVAALAALVGYLIM), 137–157 (LVLGIPTLQTGVFGGIIMGAL), 182–202 (FVPIVTSVVAIATGVLLSFAW), 223–243 (LTTFIFGIIERSLIPFGLHHI), 284–304 (AFTTGKYPFMMFGLPAAAFAI), 315–335 (VVGGLMLSAGLTAFLTGITEP), 340–360 (FLFVAPVLYGIHVLLAGTSFL), 364–384 (LLGVKIGMTFSGGFIDYILYG), and 395–415 (LVIPVGIVYAIVYYFLFDFAI). The region spanning 438 to 519 (AKLPFDVLDA…AKIMSGEITK (82 aa)) is the PTS EIIB type-1 domain. C460 acts as the Phosphocysteine intermediate; for EIIB activity in catalysis. The region spanning 560–664 (DQVFAGKMMG…SIVTPMIITN (105 aa)) is the PTS EIIA type-1 domain. Catalysis depends on H612, which acts as the Tele-phosphohistidine intermediate; for EIIA activity.

It is found in the cell membrane. Functionally, the phosphoenolpyruvate-dependent sugar phosphotransferase system (sugar PTS), a major carbohydrate active -transport system, catalyzes the phosphorylation of incoming sugar substrates concomitantly with their translocation across the cell membrane. This system is involved in alpha- and beta-glucoside transport. The polypeptide is PTS system glucoside-specific EIICBA component (glcB) (Staphylococcus aureus (strain Mu3 / ATCC 700698)).